The following is a 703-amino-acid chain: Calpain-8 (703 aa).

In terms of domain architecture, Calpain catalytic spans 45–344; the sequence is LFKDPEFPAC…YSRLEICNLS (300 aa). Residues Cys-105, His-262, and Asn-286 contribute to the active site. Residues 355–512 are domain III; it reads KWNLVLFNGR…VFSEKKAKAL (158 aa). Positions 513–531 are linker; it reads EIGDTVSGHPHEPHPRDMD. EF-hand domains follow at residues 532–566, 575–608, 605–640, and 670–703; these read EEDEHVRSLFEEFVGKDSEISANQLKRVLNEVLSK, FNINTCREMISLLDSDGTGSLGPMEFKTLWLKIR, LKIRTYLEIFQEMDHNHVGTIEAHEMRTALKKAGFT, and IRLETLFKLFRLLDKDQNGIVQLSLAEWLCCVLV. The tract at residues 532–703 is domain IV; the sequence is EEDEHVRSLF…LAEWLCCVLV (172 aa). Residues Asp-588, Asp-590, Thr-592, Ser-594, Glu-599, Asp-618, Asn-620, Thr-624, and Glu-629 each coordinate Ca(2+).

This sequence belongs to the peptidase C2 family. Monomer and homooligomer. Interacts with COPS1/GPS1, COPB1, EYA2, NME2, NME4 and TOMM70. It depends on Ca(2+) as a cofactor. Post-translationally, undergoes autolytic cleavage between Ala-5 and Ala-6 which gives rise to fragments extending from Ala-6 to the C-terminus, Ala-6 to the EF-hand 2 domain and from Ala-6 to the beginning of domain III. In terms of tissue distribution, predominantly expressed in the stomach. Localizes strictly to the surface mucus cells in the gastric epithelium and the mucus-secreting goblet cells in the duodenum. Detected in the pituitary after estrogen stimulation.

Its subcellular location is the cytoplasm. It localises to the golgi apparatus. It catalyses the reaction Broad endopeptidase specificity.. Calcium-regulated non-lysosomal thiol-protease. Involved in membrane trafficking in the gastric surface mucus cells (pit cells) and may involve the membrane trafficking of mucus cells via interactions with coat protein. Proteolytically cleaves the beta-subunit of coatomer complex. The chain is Calpain-8 (Capn8) from Rattus norvegicus (Rat).